A 191-amino-acid chain; its full sequence is UPF0149 protein VCM66_2399 (191 aa).

It belongs to the UPF0149 family.

The chain is UPF0149 protein VCM66_2399 from Vibrio cholerae serotype O1 (strain M66-2).